A 668-amino-acid chain; its full sequence is Lebercilin-like protein (668 aa).

The disordered stretch occupies residues 17 to 44 (SVALENNRRSAECKRSPGTGDFSRNSSA). Basic and acidic residues predominate over residues 22-31 (NNRRSAECKR). 2 coiled-coil regions span residues 148-259 (LHKI…EREE) and 305-336 (AAQT…IKNI). The tract at residues 351 to 402 (YPKVSSTKSVQADRKSLPFTSMRHQGTQKSDVPPLTTKGKKATGNMNHKEKS) is disordered. Positions 368-380 (PFTSMRHQGTQKS) are enriched in polar residues. Positions 420-440 (EDSKTKYEDLSREEKHLEVQV) form a coiled coil. Disordered stretches follow at residues 495-520 (RSMQ…PLRQ), 533-581 (LHHG…FGKS), and 605-668 (SGYV…KIII). The span at 546–558 (AGNTKYSHSTSKH) shows a compositional bias: polar residues. Basic and acidic residues-rich tracts occupy residues 560–572 (SNRE…HSDS) and 621–632 (GSEEPLQSKESH). Positions 633-660 (PPSQASASNAFGDSKVTVVNSIKPSSPT) are enriched in polar residues.

It belongs to the LCA5 family.

This is Lebercilin-like protein from Macaca fascicularis (Crab-eating macaque).